A 611-amino-acid polypeptide reads, in one-letter code: Conglutin beta 1 (611 aa).

A signal peptide spans 1–30 (MAKMRVRLPMLILLLGVVFLLAASIGIAYG). 2 stretches are compositionally biased toward basic and acidic residues: residues 32 to 82 (KDFT…RSQS) and 130 to 141 (SRREEREEREQE). 2 disordered regions span residues 32 to 194 (KDFT…NRFQ) and 384 to 407 (LRKH…NLRS). Positions 142-151 (QGSSSGSQRG) are enriched in low complexity. The span at 152 to 181 (SGDERRQHRERRVHREEREQEQDSRSDSRR) shows a compositional bias: basic and acidic residues. In terms of domain architecture, Cupin type-1 1 spans 186–344 (YHFSSNRFQT…TFNTRYEEIE (159 aa)). Over residues 390–402 (SSSGEGKPSESGP) the composition is skewed to low complexity. Positions 403–569 (FNLRSNKPIY…TFPGSIEDVE (167 aa)) constitute a Cupin type-1 2 domain. An N-linked (GlcNAc...) asparagine glycan is attached at Asn434. The tract at residues 476 to 495 (DQQRQQDEQEEEYEQGEEEV) is disordered. The segment covering 483-492 (EQEEEYEQGE) has biased composition (acidic residues). Asn519 carries N-linked (GlcNAc...) asparagine glycosylation. The segment covering 580–589 (FANAQPQQQQ) has biased composition (low complexity). Residues 580 to 600 (FANAQPQQQQQREKEGRRGRR) form a disordered region.

Belongs to the 7S seed storage protein family. In terms of assembly, component of globulins complexes which accumulate in seeds.

Its function is as follows. Seed storage protein. Accumulates during seed development and is hydrolyzed after germination to provide a carbon and nitrogen source for the developing seedling. The chain is Conglutin beta 1 from Lupinus angustifolius (Narrow-leaved blue lupine).